The primary structure comprises 211 residues: Protein-L-isoaspartate O-methyltransferase (211 aa).

Ser62 is an active-site residue.

Belongs to the methyltransferase superfamily. L-isoaspartyl/D-aspartyl protein methyltransferase family.

The protein resides in the cytoplasm. It catalyses the reaction [protein]-L-isoaspartate + S-adenosyl-L-methionine = [protein]-L-isoaspartate alpha-methyl ester + S-adenosyl-L-homocysteine. Functionally, catalyzes the methyl esterification of L-isoaspartyl residues in peptides and proteins that result from spontaneous decomposition of normal L-aspartyl and L-asparaginyl residues. It plays a role in the repair and/or degradation of damaged proteins. This Shewanella frigidimarina (strain NCIMB 400) protein is Protein-L-isoaspartate O-methyltransferase.